Consider the following 122-residue polypeptide: Glycine cleavage system H protein (122 aa).

Residues 19-101 (VVTVGITNYA…EKEGWLWKMT (83 aa)) enclose the Lipoyl-binding domain. The residue at position 60 (lysine 60) is an N6-lipoyllysine.

Belongs to the GcvH family. As to quaternary structure, the glycine cleavage system is composed of four proteins: P, T, L and H. The cofactor is (R)-lipoate.

Functionally, the glycine cleavage system catalyzes the degradation of glycine. The H protein shuttles the methylamine group of glycine from the P protein to the T protein. This Bartonella quintana (strain Toulouse) (Rochalimaea quintana) protein is Glycine cleavage system H protein.